The chain runs to 211 residues: B3 domain-containing protein At5g42700 (211 aa).

Residues 110-201 constitute a DNA-binding region (TF-B3); the sequence is FVKSMLQSHV…AFKVYITRVG (92 aa).

It localises to the nucleus. The protein is B3 domain-containing protein At5g42700 of Arabidopsis thaliana (Mouse-ear cress).